Here is a 186-residue protein sequence, read N- to C-terminus: Riboflavin kinase (186 aa).

2 residues coordinate Mg(2+): Thr42 and Asn44. Residue Glu123 is the Nucleophile of the active site.

This sequence belongs to the flavokinase family. Requires Zn(2+) as cofactor. The cofactor is Mg(2+).

The catalysed reaction is riboflavin + ATP = FMN + ADP + H(+). Its pathway is cofactor biosynthesis; FMN biosynthesis; FMN from riboflavin (ATP route): step 1/1. Its function is as follows. Catalyzes the phosphorylation of riboflavin (vitamin B2) to form flavin mononucleotide (FMN) coenzyme. This is Riboflavin kinase (FMN1) from Eremothecium gossypii (strain ATCC 10895 / CBS 109.51 / FGSC 9923 / NRRL Y-1056) (Yeast).